The following is a 532-amino-acid chain: uncharacterized protein (532 aa).

Helical transmembrane passes span 7-26 (HSSY…LGRI), 30-52 (GLSL…GVII), 59-77 (FGLV…PGFF), 87-109 (LILI…KYAF), 116-134 (VVGL…AVAI), and 139-161 (SPLA…ILFV). RCK C-terminal domains lie at 179–262 (LEIE…LIGE) and 263–346 (REEG…LLGN). 6 helical membrane-spanning segments follow: residues 356-376 (FFPI…NISF), 386-408 (LTGG…PIIW), 421-440 (LGLL…NLVA), 445-467 (SGLL…AVIV), 474-496 (INIL…LAAA), and 506-528 (SVAY…QVIS).

It belongs to the AAE transporter (TC 2.A.81) family.

It localises to the cell membrane. This is an uncharacterized protein from Bacteroides thetaiotaomicron (strain ATCC 29148 / DSM 2079 / JCM 5827 / CCUG 10774 / NCTC 10582 / VPI-5482 / E50).